We begin with the raw amino-acid sequence, 553 residues long: Putative transport protein YidE (553 aa).

5 helical membrane passes run 4-24 (IALTVSILALVAVVGLFIGNV), 28-48 (GVGLGIGGVLFGGIIVGHFVS), 65-85 (FGLILFVYTIGIQVGPGFFAS), 95-115 (LFAVLIVIIGGLVTAILHKLF), and 158-178 (MSYAMAYPFGICGILFTMWML). RCK C-terminal domains are found at residues 191–276 (QQHE…VIGQ) and 279–361 (DTSL…VLGN). 6 consecutive transmembrane segments (helical) span residues 371-391 (MLPVFIGIGLGVLLGSIPVFV), 393-413 (GFPAALKLGLAGGPLIMALIL), 439-459 (IVLFLSVVGLKSGGDFIHTLV), 464-484 (LSWIGYGALITAVPLITVGIL), 493-513 (YLTMCGMLAGSMTDPPALAFA), and 533-553 (LVMFLRIITPQLLAVLFWSIG).

This sequence belongs to the AAE transporter (TC 2.A.81) family. YidE subfamily.

The protein resides in the cell membrane. The protein is Putative transport protein YidE of Escherichia coli O6:H1 (strain CFT073 / ATCC 700928 / UPEC).